A 190-amino-acid chain; its full sequence is Segregation and condensation protein B (190 aa).

The protein belongs to the ScpB family. In terms of assembly, homodimer. Homodimerization may be required to stabilize the binding of ScpA to the Smc head domains. Component of a cohesin-like complex composed of ScpA, ScpB and the Smc homodimer, in which ScpA and ScpB bind to the head domain of Smc. The presence of the three proteins is required for the association of the complex with DNA.

It localises to the cytoplasm. Its function is as follows. Participates in chromosomal partition during cell division. May act via the formation of a condensin-like complex containing Smc and ScpA that pull DNA away from mid-cell into both cell halves. The chain is Segregation and condensation protein B from Bacillus thuringiensis subsp. konkukian (strain 97-27).